Here is a 760-residue protein sequence, read N- to C-terminus: Xaa-Pro dipeptidyl-peptidase (760 aa).

Active-site charge relay system residues include serine 349, aspartate 469, and histidine 499.

Belongs to the peptidase S15 family. As to quaternary structure, homodimer.

The protein localises to the cytoplasm. The catalysed reaction is Hydrolyzes Xaa-Pro-|- bonds to release unblocked, N-terminal dipeptides from substrates including Ala-Pro-|-p-nitroanilide and (sequentially) Tyr-Pro-|-Phe-Pro-|-Gly-Pro-|-Ile.. Its function is as follows. Removes N-terminal dipeptides sequentially from polypeptides having unsubstituted N-termini provided that the penultimate residue is proline. In Streptococcus pyogenes serotype M2 (strain MGAS10270), this protein is Xaa-Pro dipeptidyl-peptidase.